The following is a 316-amino-acid chain: Acetaldehyde dehydrogenase (316 aa).

Ser11 to Ile14 is a binding site for NAD(+). Cys131 serves as the catalytic Acyl-thioester intermediate. NAD(+) contacts are provided by residues Ser162 to Asn170 and Asn289.

The protein belongs to the acetaldehyde dehydrogenase family. As to quaternary structure, interacts with MhpE.

The enzyme catalyses acetaldehyde + NAD(+) + CoA = acetyl-CoA + NADH + H(+). The protein operates within aromatic compound metabolism; 3-phenylpropanoate degradation. In terms of biological role, catalyzes the conversion of acetaldehyde to acetyl-CoA, using NAD(+) and coenzyme A. Is the final enzyme in the meta-cleavage pathway for the degradation of aromatic compounds. This Escherichia coli O81 (strain ED1a) protein is Acetaldehyde dehydrogenase.